The following is a 265-amino-acid chain: uncharacterized protein (265 aa).

A coiled-coil region spans residues A143–A205.

This is an uncharacterized protein from Aquifex aeolicus (strain VF5).